A 578-amino-acid polypeptide reads, in one-letter code: A-type ATP synthase subunit A (578 aa).

228 to 235 provides a ligand contact to ATP; sequence GPFGSGKT.

This sequence belongs to the ATPase alpha/beta chains family. As to quaternary structure, has multiple subunits with at least A(3), B(3), C, D, E, F, H, I and proteolipid K(x).

It is found in the cell membrane. It catalyses the reaction ATP + H2O + 4 H(+)(in) = ADP + phosphate + 5 H(+)(out). In terms of biological role, component of the A-type ATP synthase that produces ATP from ADP in the presence of a proton gradient across the membrane. The A chain is the catalytic subunit. This Methanosarcina barkeri (strain Fusaro / DSM 804) protein is A-type ATP synthase subunit A.